The sequence spans 575 residues: Carboxylesterase 5A (575 aa).

An N-terminal signal peptide occupies residues 1-20; that stretch reads MSGNWVHPGQILIWAIWVLA. An intrachain disulfide couples cysteine 94 to cysteine 121. Residue serine 226 is the Acyl-ester intermediate of the active site. Asparagine 281 is a glycosylation site (N-linked (GlcNAc...) asparagine). Glutamate 345 acts as the Charge relay system in catalysis. Asparagine 363 is a glycosylation site (N-linked (GlcNAc...) asparagine). Histidine 454 acts as the Charge relay system in catalysis. N-linked (GlcNAc...) asparagine glycans are attached at residues asparagine 513 and asparagine 524.

It belongs to the type-B carboxylesterase/lipase family. In terms of processing, N-glycosylated.

It is found in the secreted. The catalysed reaction is a carboxylic ester + H2O = an alcohol + a carboxylate + H(+). Functionally, involved in the detoxification of xenobiotics and in the activation of ester and amide prodrugs. The chain is Carboxylesterase 5A (CES5A) from Homo sapiens (Human).